Reading from the N-terminus, the 23-residue chain is Aurein-4.1 (23 aa).

Belongs to the frog skin active peptide (FSAP) family. Aurein subfamily. In terms of tissue distribution, expressed by the skin dorsal glands.

It localises to the secreted. Its function is as follows. Has no antimicrobial or anticancer activity. This is Aurein-4.1 from Ranoidea aurea (Green and golden bell frog).